The chain runs to 256 residues: Cell division protein DivIB (256 aa).

Residues 1–23 lie on the Cytoplasmic side of the membrane; it reads MSKDLISTDEYIKIKKKRKRIKK. A helical transmembrane segment spans residues 24–44; the sequence is IVVLFIFLISILVTLCLKIPY. The POTRA domain maps to 45-113; the sequence is FNIESIEIKG…NKLEIYVKER (69 aa). Residues 45-256 lie on the Extracellular side of the membrane; that stretch reads FNIESIEIKG…EGNPVFYIEK (212 aa).

The protein belongs to the FtsQ/DivIB family. DivIB subfamily.

The protein localises to the cell membrane. Cell division protein that may be involved in stabilizing or promoting the assembly of the division complex. The protein is Cell division protein DivIB of Clostridium botulinum (strain Loch Maree / Type A3).